The following is a 1518-amino-acid chain: Probable serine/threonine-protein kinase HSL1 (1518 aa).

Disordered stretches follow at residues M1–E43 and R55–L83. A compositionally biased stretch (polar residues) spans R55–K68. The 289-residue stretch at W81–I369 folds into the Protein kinase domain. ATP contacts are provided by residues L87–V95 and K110. Residue D239 is the Proton acceptor of the active site. The disordered stretch occupies residues L467–E502. Residues K492–S501 are compositionally biased toward polar residues. S511 is modified (phosphoserine). The segment covering S599–R611 has biased composition (low complexity). A disordered region spans residues S599 to L651. 2 positions are modified to phosphoserine: S629 and S685. Positions E741–P783 are disordered. Residues E746 to D758 show a composition bias toward basic and acidic residues. Over residues T759–N774 the composition is skewed to polar residues. Phosphoserine is present on residues S837 and S866. The span at E856 to L876 shows a compositional bias: basic and acidic residues. Disordered stretches follow at residues E856–I898, D1005–A1030, A1150–V1170, and S1220–N1243. Position 1220 is a phosphoserine (S1220). A compositionally biased stretch (polar residues) spans E1222 to N1243. Residue S1250 is modified to Phosphoserine. The interval E1259–K1291 is disordered. Residues H1265 to Y1278 show a composition bias toward polar residues. Phosphoserine is present on residues S1284, S1287, and S1325.

This sequence belongs to the protein kinase superfamily. CAMK Ser/Thr protein kinase family. NIM1 subfamily.

The protein localises to the bud neck. It catalyses the reaction L-seryl-[protein] + ATP = O-phospho-L-seryl-[protein] + ADP + H(+). The enzyme catalyses L-threonyl-[protein] + ATP = O-phospho-L-threonyl-[protein] + ADP + H(+). In Saccharomyces cerevisiae (strain ATCC 204508 / S288c) (Baker's yeast), this protein is Probable serine/threonine-protein kinase HSL1 (HSL1).